We begin with the raw amino-acid sequence, 916 residues long: DNA ligase 1 (916 aa).

Positions Met-1–Gln-10 are enriched in polar residues. Residues Met-1–Thr-197 form a disordered region. The segment covering Lys-13–Asn-43 has biased composition (basic and acidic residues). 3 positions are modified to phosphoserine: Ser-49, Ser-51, and Ser-65. Thr-77 is subject to Phosphothreonine. Positions Pro-99–Met-111 are enriched in polar residues. Residues Pro-119–Pro-129 show a composition bias toward basic residues. An N6-acetyllysine modification is found at Lys-144. A compositionally biased stretch (basic and acidic residues) spans Lys-153 to Asp-177. Over residues Pro-185–Thr-197 the composition is skewed to polar residues. At Thr-193 the chain carries Phosphothreonine. Lys-225 carries the N6-acetyllysine modification. A phosphoserine mark is found at Ser-228 and Ser-229. Thr-232 is subject to Phosphothreonine. A disordered region spans residues Pro-236 to Pro-266. Positions Val-238–Gly-257 are enriched in basic and acidic residues. Residues Arg-447–Ser-456 are interaction with target DNA. Residue Glu-564 participates in ATP binding. Lys-566 serves as the catalytic N6-AMP-lysine intermediate. Positions 571 and 619 each coordinate ATP. Glu-619 contacts Mg(2+). Residues Lys-640–Lys-642 are interaction with target DNA. Glu-718 lines the Mg(2+) pocket. Positions 723 and 742 each coordinate ATP. Thr-796 bears the Phosphothreonine mark. 4 positions are modified to phosphoserine: Ser-799, Ser-906, Ser-907, and Ser-911. The disordered stretch occupies residues Asp-879 to Tyr-916. The segment covering Glu-883 to Asp-908 has biased composition (polar residues).

This sequence belongs to the ATP-dependent DNA ligase family. As to quaternary structure, interacts with PCNA. Interacts with POLB. Requires Mg(2+) as cofactor.

It localises to the nucleus. It carries out the reaction ATP + (deoxyribonucleotide)n-3'-hydroxyl + 5'-phospho-(deoxyribonucleotide)m = (deoxyribonucleotide)n+m + AMP + diphosphate.. DNA ligase that seals nicks in double-stranded during DNA repair. Also involved in DNA replication and DNA recombination. This chain is DNA ligase 1 (Lig1), found in Mus musculus (Mouse).